We begin with the raw amino-acid sequence, 283 residues long: Nucleotide-binding protein DR_1434 (283 aa).

8–15 (GLSGSGKS) is a binding site for ATP. 57–60 (DTRT) serves as a coordination point for GTP.

The protein belongs to the RapZ-like family.

Displays ATPase and GTPase activities. The sequence is that of Nucleotide-binding protein DR_1434 from Deinococcus radiodurans (strain ATCC 13939 / DSM 20539 / JCM 16871 / CCUG 27074 / LMG 4051 / NBRC 15346 / NCIMB 9279 / VKM B-1422 / R1).